Here is a 171-residue protein sequence, read N- to C-terminus: NADH-quinone oxidoreductase subunit B 1 (171 aa).

Residues cysteine 44, cysteine 45, cysteine 110, and cysteine 139 each coordinate [4Fe-4S] cluster.

The protein belongs to the complex I 20 kDa subunit family. In terms of assembly, NDH-1 is composed of 14 different subunits. Subunits NuoB, C, D, E, F, and G constitute the peripheral sector of the complex. [4Fe-4S] cluster is required as a cofactor.

The protein resides in the cell inner membrane. The enzyme catalyses a quinone + NADH + 5 H(+)(in) = a quinol + NAD(+) + 4 H(+)(out). Its function is as follows. NDH-1 shuttles electrons from NADH, via FMN and iron-sulfur (Fe-S) centers, to quinones in the respiratory chain. The immediate electron acceptor for the enzyme in this species is believed to be ubiquinone. Couples the redox reaction to proton translocation (for every two electrons transferred, four hydrogen ions are translocated across the cytoplasmic membrane), and thus conserves the redox energy in a proton gradient. In Opitutus terrae (strain DSM 11246 / JCM 15787 / PB90-1), this protein is NADH-quinone oxidoreductase subunit B 1.